The chain runs to 157 residues: Pyruvoyl-dependent arginine decarboxylase 1 (157 aa).

At Ser-41 the chain carries Pyruvic acid (Ser).

This sequence belongs to the PdaD family. It depends on pyruvate as a cofactor.

It catalyses the reaction L-arginine + H(+) = agmatine + CO2. The polypeptide is Pyruvoyl-dependent arginine decarboxylase 1 (pdaD1) (Archaeoglobus fulgidus (strain ATCC 49558 / DSM 4304 / JCM 9628 / NBRC 100126 / VC-16)).